The sequence spans 505 residues: Glutamate--tRNA ligase (505 aa).

The 'HIGH' region signature appears at Pro12 to Thr22. The 'KMSKS' region signature appears at Lys253 to Arg257. Lys256 lines the ATP pocket.

Belongs to the class-I aminoacyl-tRNA synthetase family. Glutamate--tRNA ligase type 1 subfamily. Monomer.

Its subcellular location is the cytoplasm. It catalyses the reaction tRNA(Glu) + L-glutamate + ATP = L-glutamyl-tRNA(Glu) + AMP + diphosphate. Catalyzes the attachment of glutamate to tRNA(Glu) in a two-step reaction: glutamate is first activated by ATP to form Glu-AMP and then transferred to the acceptor end of tRNA(Glu). In Chlamydia pneumoniae (Chlamydophila pneumoniae), this protein is Glutamate--tRNA ligase.